A 204-amino-acid chain; its full sequence is Factor arrest protein 3 (204 aa).

Component of a complex at least composed of FAR3, FAR7, FAR8, FAR10, FAR11 and VPS64.

It localises to the endoplasmic reticulum. Functionally, participates in the control of the reentry into the cell cycle following pheromone treatment. In Saccharomyces cerevisiae (strain ATCC 204508 / S288c) (Baker's yeast), this protein is Factor arrest protein 3 (FAR3).